Consider the following 188-residue polypeptide: UPF0398 protein ABC2016 (188 aa).

It belongs to the UPF0398 family.

The polypeptide is UPF0398 protein ABC2016 (Shouchella clausii (strain KSM-K16) (Alkalihalobacillus clausii)).